The primary structure comprises 418 residues: Magnesium transporter MRS2-E (418 aa).

The tract at residues 119 to 146 is disordered; the sequence is DAAPSTNPAAADRGNGTEQGDQGSVPGL. Positions 166 to 232 form a coiled coil; it reads VCLEHACKDL…RDELEHLLDD (67 aa). A compositionally biased stretch (basic and acidic residues) spans 258-268; that stretch reads DSHKYASVDHD. Residues 258 to 287 are disordered; that stretch reads DSHKYASVDHDDDREEEDHDDETESGRESS. Residues 269–280 are compositionally biased toward acidic residues; the sequence is DDREEEDHDDET. A helical transmembrane segment spans residues 344–364; the sequence is GVMLTTATVVVTAGIVVVSLF. The Required for magnesium transport activity signature appears at 365–367; it reads GMN. The chain crosses the membrane as a helical span at residues 389-409; that stretch reads FWETTFGTVAGCIAIYLLAIY.

This sequence belongs to the CorA metal ion transporter (MIT) (TC 1.A.35.5) family.

It is found in the membrane. In terms of biological role, magnesium transporter that may mediate the influx of magnesium. This Oryza sativa subsp. indica (Rice) protein is Magnesium transporter MRS2-E (MRS2-E).